The following is a 562-amino-acid chain: Phosphomethylpyrimidine synthase (562 aa).

Substrate-binding positions include asparagine 179, methionine 208, tyrosine 237, histidine 273, 293 to 295 (SRG), 334 to 337 (DGLR), and glutamate 373. Histidine 377 is a binding site for Zn(2+). Substrate is bound at residue tyrosine 400. Histidine 441 provides a ligand contact to Zn(2+). [4Fe-4S] cluster-binding residues include cysteine 521, cysteine 524, and cysteine 529.

Belongs to the ThiC family. The cofactor is [4Fe-4S] cluster.

The enzyme catalyses 5-amino-1-(5-phospho-beta-D-ribosyl)imidazole + S-adenosyl-L-methionine = 4-amino-2-methyl-5-(phosphooxymethyl)pyrimidine + CO + 5'-deoxyadenosine + formate + L-methionine + 3 H(+). It participates in cofactor biosynthesis; thiamine diphosphate biosynthesis. In terms of biological role, catalyzes the synthesis of the hydroxymethylpyrimidine phosphate (HMP-P) moiety of thiamine from aminoimidazole ribotide (AIR) in a radical S-adenosyl-L-methionine (SAM)-dependent reaction. The sequence is that of Phosphomethylpyrimidine synthase from Geobacillus kaustophilus (strain HTA426).